The following is a 171-amino-acid chain: Shikimate kinase (171 aa).

ATP is bound at residue 11 to 16 (ATGKTT). T15 contacts Mg(2+). The substrate site is built by D33, R57, and G79. R117 provides a ligand contact to ATP. R136 contacts substrate.

The protein belongs to the shikimate kinase family. Monomer. Requires Mg(2+) as cofactor.

It localises to the cytoplasm. It carries out the reaction shikimate + ATP = 3-phosphoshikimate + ADP + H(+). The protein operates within metabolic intermediate biosynthesis; chorismate biosynthesis; chorismate from D-erythrose 4-phosphate and phosphoenolpyruvate: step 5/7. Functionally, catalyzes the specific phosphorylation of the 3-hydroxyl group of shikimic acid using ATP as a cosubstrate. This Thermoanaerobacter pseudethanolicus (strain ATCC 33223 / 39E) (Clostridium thermohydrosulfuricum) protein is Shikimate kinase.